Consider the following 329-residue polypeptide: Ribonucleoside-diphosphate reductase subunit beta (329 aa).

Residues Asp-66, Glu-97, and His-101 each coordinate Fe cation. Tyr-105 is an active-site residue. Positions 164, 198, and 201 each coordinate Fe cation.

This sequence belongs to the ribonucleoside diphosphate reductase small chain family. Tetramer of two alpha and two beta subunits. It depends on Fe cation as a cofactor.

The enzyme catalyses a 2'-deoxyribonucleoside 5'-diphosphate + [thioredoxin]-disulfide + H2O = a ribonucleoside 5'-diphosphate + [thioredoxin]-dithiol. Functionally, provides the precursors necessary for DNA synthesis. Catalyzes the biosynthesis of deoxyribonucleotides from the corresponding ribonucleotides. The chain is Ribonucleoside-diphosphate reductase subunit beta (nrdF) from Bacillus subtilis (strain 168).